The chain runs to 715 residues: MNSSSSHRNILVTSALPYANGPIHLGHVLEGIQTDIWVRFQKAIGNECYFFCADDTHGTPVMLAARKEGITPEQLIERVGQEHYRDLTSFGIEYDHYDSTHSKANQEISKDIYLKLKSKGHISRRSIEQSYCETDKMFLPDRFIKGTCPNCKSKDQYGDNCEVCGATYSPKDLIDSHCSLCGTSPVVKNSDHIFFKLGDFHKKDEKSTSLETINPSHLKTDFDLQSWIETSGVVSESEGVKKKLKEWFDAGLQDWDISRDGPYFGFEIPDETNKYFYVWLDAPIGYMASSKNFFEKNFPNEPNKFDSFWKNKNSEIVHFIGKDILYFHTLFWPAMLEGSDYRAPSKVHVHGFIGVNGEKMSKSRGTFIKAETFVKYLDPEHLRFYLASKLGPGMDDIDLSFEDFINKVNSDLVGNLINSVSRVSTTILDALDRTLGVVSKEGLALIEEILYQTVKFGPGEDSIQNIIKYAYDQRNYAKVLREITRLGDRVNRYVNDNAPWKLIKENPEKAREVVTVTLNASRFLAIYLYPVVPKISEQIYKLLNLQDSPSFKDLDKNRILENIKVLPYEMISKRVDEKAIKVMLEENKQSEHSKKVETSENPVPEERLEISIDDLSKVELRVGQIVEAGPVDGADKLVNVKVDLGELGIKNVFAGIKVAYQPENLKGLKVVVVANLKPRKMKFGISEAMLLASGEGESLSLFIPHKDAKPGDRLK.

The 'HIGH' region motif lies at 17–27 (PYANGPIHLGH). Positions 148, 151, 161, and 164 each coordinate Zn(2+). Residues 359 to 363 (KMSKS) carry the 'KMSKS' region motif. Lys362 is an ATP binding site. The region spanning 614-715 (DLSKVELRVG…KDAKPGDRLK (102 aa)) is the tRNA-binding domain.

It belongs to the class-I aminoacyl-tRNA synthetase family. MetG type 1 subfamily. Homodimer. It depends on Zn(2+) as a cofactor.

Its subcellular location is the cytoplasm. The catalysed reaction is tRNA(Met) + L-methionine + ATP = L-methionyl-tRNA(Met) + AMP + diphosphate. Its function is as follows. Is required not only for elongation of protein synthesis but also for the initiation of all mRNA translation through initiator tRNA(fMet) aminoacylation. The polypeptide is Methionine--tRNA ligase (Leptospira interrogans serogroup Icterohaemorrhagiae serovar copenhageni (strain Fiocruz L1-130)).